The following is a 218-amino-acid chain: Ras-related protein Rab-4A (218 aa).

6 residues coordinate GDP: Gly23, Thr24, Gly25, Lys26, Ser27, and Cys28. Residues Gly23, Thr24, Gly25, Lys26, Ser27, Cys28, Ser42, His44, and Thr45 each contribute to the GTP site. Mg(2+) is bound at residue Ser27. The Switch 1 motif lies at 44-49 (HTIGVE). Residues Thr45 and Asp68 each contribute to the Mg(2+) site. The short motif at 70 to 79 (AGQERFRSVT) is the Switch 2 element. Gly71 is a binding site for GTP. At Gln72 the chain carries 5-glutamyl serotonin. Residues Asn126, Lys127, Asp129, Ala157, and Leu158 each coordinate GDP. 5 residues coordinate GTP: Asn126, Lys127, Asp129, Ala157, and Leu158. Position 190 is a phosphoserine (Ser190). Ser204 is subject to Phosphoserine; by CDK1. S-geranylgeranyl cysteine attachment occurs at residues Cys216 and Cys218. At Cys218 the chain carries Cysteine methyl ester.

This sequence belongs to the small GTPase superfamily. Rab family. Interacts with SGSM1, SGSM2 and SGSM3. Interacts with RAB11FIP1, RABEP1, ZFYVE20 and RUFY1. Interacts (membrane-bound form) with NDRG1; the interaction involves NDRG1 in vesicular recycling of E-cadherin. Interacts (in GTP-bound form) with GRIPAP1 (via N-terminus). Interacts with RABEP1 and RBSN. Does not interact with HPS4. Interacts with RABEP2; this interaction may mediate VEGFR2 cell surface expression. It depends on Mg(2+) as a cofactor. In terms of processing, phosphorylated by CDK1 kinase during mitosis. Post-translationally, serotonylation of Gln-72 by TGM2 during activation and aggregation of platelets leads to constitutive activation of GTPase activity.

The protein resides in the membrane. It localises to the cytoplasm. The protein localises to the early endosome membrane. It is found in the recycling endosome membrane. It carries out the reaction GTP + H2O = GDP + phosphate + H(+). Its activity is regulated as follows. Regulated by guanine nucleotide exchange factors (GEFs) which promote the exchange of bound GDP for free GTP. Regulated by GTPase activating proteins (GAPs) which increase the GTP hydrolysis activity. Inhibited by GDP dissociation inhibitors (GDIs). Functionally, the small GTPases Rab are key regulators of intracellular membrane trafficking, from the formation of transport vesicles to their fusion with membranes. Rabs cycle between an inactive GDP-bound form and an active GTP-bound form that is able to recruit to membranes different sets of downstream effectors directly responsible for vesicle formation, movement, tethering and fusion. RAB4A is involved in protein transport. Also plays a role in vesicular traffic. Mediates VEGFR2 endosomal trafficking to enhance VEGFR2 signaling. Acts as a regulator of platelet alpha-granule release during activation and aggregation of platelets. This is Ras-related protein Rab-4A from Homo sapiens (Human).